A 256-amino-acid chain; its full sequence is MALPDFSMRQLLEAGVHFGHQTHRWNPKMKPYIFGDRNNIHIIDLAQTVPLLSRALQVVSDTVARGGRVLFVGTKRQASELIADSAKRSAQYYVNARWLGGMMTNWKTISNSIQRLRKLDEILNGDAQGFTKKERLNLEREREKLDKALGGIRDMGGTPDLMFIIDTNKEKIAIDEAKRLGIPVVAIIDSNCDPDLIDYPIPGNDDASRAIALYCDLIARAAIDGIARQQSASGRDLGASIEAPVEPTLVEGGTEA.

The protein belongs to the universal ribosomal protein uS2 family.

In Rhizobium rhizogenes (strain K84 / ATCC BAA-868) (Agrobacterium radiobacter), this protein is Small ribosomal subunit protein uS2.